A 238-amino-acid chain; its full sequence is tRNA (guanine-N(7)-)-methyltransferase (238 aa).

Glu68, Glu93, Asp120, and Asp143 together coordinate S-adenosyl-L-methionine. Asp143 is a catalytic residue. Substrate is bound by residues Lys147, Asp179, and 216-219 (TKFE).

The protein belongs to the class I-like SAM-binding methyltransferase superfamily. TrmB family.

It catalyses the reaction guanosine(46) in tRNA + S-adenosyl-L-methionine = N(7)-methylguanosine(46) in tRNA + S-adenosyl-L-homocysteine. It participates in tRNA modification; N(7)-methylguanine-tRNA biosynthesis. Its function is as follows. Catalyzes the formation of N(7)-methylguanine at position 46 (m7G46) in tRNA. The sequence is that of tRNA (guanine-N(7)-)-methyltransferase from Marinobacter nauticus (strain ATCC 700491 / DSM 11845 / VT8) (Marinobacter aquaeolei).